The primary structure comprises 567 residues: ETHYLENE INSENSITIVE 3-like 3 protein (567 aa).

The stretch at 24–44 (NVAEIDVSDEEIDADDLERRM) forms a coiled coil. Disordered stretches follow at residues 55–81 (KERQ…AQRK) and 286–393 (IQQP…RNIL). Basic and acidic residues predominate over residues 69-79 (ETPKKISDQAQ). Residues 162–288 (SQFVLQDLQD…LNQEESLIQQ (127 aa)) mediate DNA binding. Positions 286–299 (IQQPSSDNGNSNVT) are enriched in polar residues. A compositionally biased stretch (basic and acidic residues) spans 300–312 (ETHRRGNNADRRK). A compositionally biased stretch (basic residues) spans 363-372 (KHRRRKRPRI).

Belongs to the EIN3 family. In terms of assembly, interacts with MYB72.

It localises to the nucleus. In terms of biological role, probable transcription factor that may be involved in the ethylene response pathway. In Arabidopsis thaliana (Mouse-ear cress), this protein is ETHYLENE INSENSITIVE 3-like 3 protein (EIL3).